Consider the following 79-residue polypeptide: Short neurotoxin 3 (79 aa).

The first 21 residues, 1 to 21, serve as a signal peptide directing secretion; it reads MKTLLLTLVMVTIMCLDLGYT. Intrachain disulfides connect cysteine 24–cysteine 41, cysteine 34–cysteine 59, cysteine 63–cysteine 71, and cysteine 72–cysteine 77.

This sequence belongs to the three-finger toxin family. Short-chain subfamily. Type III alpha-neurotoxin sub-subfamily. In terms of tissue distribution, expressed by the venom gland.

Its subcellular location is the secreted. Binds with high affinity to muscle nicotinic acetylcholine receptor (nAChR) and hinders acetylcholine binding to the receptor, thereby impairing neuromuscular transmission. Competes with the binding of alpha-bungarotoxin on muscle AChR (from Torpedo) with an IC(50) of 0.30 uM. Causes muscle paralysis, spasms and increased respiration. The chain is Short neurotoxin 3 from Pseudonaja textilis (Eastern brown snake).